Reading from the N-terminus, the 455-residue chain is Deoxyribodipyrimidine photo-lyase (455 aa).

The Photolyase/cryptochrome alpha/beta domain occupies 2-131 (SVAVVLFTSD…ELHVHDAVVT (130 aa)). FAD-binding positions include Tyr219 and 231-235 (TSRLS). 2 interaction with DNA regions span residues 266–273 (QLAWRDFH) and 330–331 (NR). 361–363 (DGD) serves as a coordination point for FAD. Position 392 (Gln392) interacts with DNA.

Belongs to the DNA photolyase class-1 family. In terms of assembly, monomer. It depends on FAD as a cofactor. Requires coenzyme F420-(gamma-Glu)n as cofactor.

It carries out the reaction cyclobutadipyrimidine (in DNA) = 2 pyrimidine residues (in DNA).. Its function is as follows. Involved in repair of UV radiation-induced DNA damage. Catalyzes the light-dependent monomerization (300-600 nm) of cyclobutyl pyrimidine dimers (in cis-syn configuration), which are formed between adjacent bases on the same DNA strand upon exposure to ultraviolet radiation. This Streptomyces griseus protein is Deoxyribodipyrimidine photo-lyase (phr).